The following is a 244-amino-acid chain: 5-oxoprolinase subunit A (244 aa).

Belongs to the LamB/PxpA family. In terms of assembly, forms a complex composed of PxpA, PxpB and PxpC.

It catalyses the reaction 5-oxo-L-proline + ATP + 2 H2O = L-glutamate + ADP + phosphate + H(+). Its function is as follows. Catalyzes the cleavage of 5-oxoproline to form L-glutamate coupled to the hydrolysis of ATP to ADP and inorganic phosphate. This Escherichia coli O7:K1 (strain IAI39 / ExPEC) protein is 5-oxoprolinase subunit A.